We begin with the raw amino-acid sequence, 228 residues long: PKHD-type hydroxylase Rmet_0838 (228 aa).

Residues 78-179 (RVLPPMFNRY…RWASFFWAQS (102 aa)) enclose the Fe2OG dioxygenase domain. Fe cation is bound by residues histidine 96, aspartate 98, and histidine 160. Arginine 170 contacts 2-oxoglutarate.

Fe(2+) is required as a cofactor. It depends on L-ascorbate as a cofactor.

This Cupriavidus metallidurans (strain ATCC 43123 / DSM 2839 / NBRC 102507 / CH34) (Ralstonia metallidurans) protein is PKHD-type hydroxylase Rmet_0838.